A 379-amino-acid polypeptide reads, in one-letter code: Homoserine O-succinyltransferase (379 aa).

In terms of domain architecture, AB hydrolase-1 spans 51–360 (NAVLICHALS…DSPYGHDAFL (310 aa)). The active-site Nucleophile is serine 157. Arginine 227 serves as a coordination point for substrate. Active-site residues include aspartate 323 and histidine 356. Aspartate 357 contacts substrate.

Belongs to the AB hydrolase superfamily. MetX family. Homodimer.

The protein localises to the cytoplasm. It catalyses the reaction L-homoserine + succinyl-CoA = O-succinyl-L-homoserine + CoA. The protein operates within amino-acid biosynthesis; L-methionine biosynthesis via de novo pathway; O-succinyl-L-homoserine from L-homoserine: step 1/1. Functionally, transfers a succinyl group from succinyl-CoA to L-homoserine, forming succinyl-L-homoserine. The chain is Homoserine O-succinyltransferase from Pseudomonas putida (strain W619).